The sequence spans 226 residues: Enolase-phosphatase E1 (226 aa).

It belongs to the HAD-like hydrolase superfamily. MasA/MtnC family. As to quaternary structure, monomer. Mg(2+) serves as cofactor.

The catalysed reaction is 5-methylsulfanyl-2,3-dioxopentyl phosphate + H2O = 1,2-dihydroxy-5-(methylsulfanyl)pent-1-en-3-one + phosphate. Its pathway is amino-acid biosynthesis; L-methionine biosynthesis via salvage pathway; L-methionine from S-methyl-5-thio-alpha-D-ribose 1-phosphate: step 3/6. It functions in the pathway amino-acid biosynthesis; L-methionine biosynthesis via salvage pathway; L-methionine from S-methyl-5-thio-alpha-D-ribose 1-phosphate: step 4/6. In terms of biological role, bifunctional enzyme that catalyzes the enolization of 2,3-diketo-5-methylthiopentyl-1-phosphate (DK-MTP-1-P) into the intermediate 2-hydroxy-3-keto-5-methylthiopentenyl-1-phosphate (HK-MTPenyl-1-P), which is then dephosphorylated to form the acireductone 1,2-dihydroxy-3-keto-5-methylthiopentene (DHK-MTPene). The polypeptide is Enolase-phosphatase E1 (Shewanella putrefaciens (strain CN-32 / ATCC BAA-453)).